We begin with the raw amino-acid sequence, 341 residues long: Transcription factor ETV7 (341 aa).

Positions 33–117 constitute a PNT domain; the sequence is NLLGEGGICK…ELLQYIKTQR (85 aa). Positions 224-305 form a DNA-binding region, ETS; it reads RLLWDYVYQL…PGQKLLFRFL (82 aa). Positions 315–341 are disordered; the sequence is KHSHLEPLESQEQDRIEFKDKRPEISP.

This sequence belongs to the ETS family. In terms of tissue distribution, expressed in hematopoietic tissues.

Its subcellular location is the nucleus. Functionally, transcriptional repressor; binds to the DNA sequence 5'-CCGGAAGT-3'. Isoform A does not seem to have a repressor activity. Isoform C does not seem to have a repressor activity. This chain is Transcription factor ETV7 (ETV7), found in Homo sapiens (Human).